The following is a 118-amino-acid chain: Small ribosomal subunit protein uS11 (118 aa).

The protein belongs to the universal ribosomal protein uS11 family. Part of the 30S ribosomal subunit. Interacts with proteins S7 and S18. Binds to IF-3.

In terms of biological role, located on the platform of the 30S subunit, it bridges several disparate RNA helices of the 16S rRNA. Forms part of the Shine-Dalgarno cleft in the 70S ribosome. The sequence is that of Small ribosomal subunit protein uS11 from Carsonella ruddii (strain PV).